A 68-amino-acid chain; its full sequence is Beta-defensin 1 (68 aa).

The N-terminal stretch at 1-21 (MRTSYLLLFILCLVLCDMDSG) is a signal peptide. Residues 22–32 (DTFLTGLGHRS) constitute a propeptide that is removed on maturation. 3 disulfide bridges follow: cysteine 37-cysteine 66, cysteine 44-cysteine 59, and cysteine 49-cysteine 67.

This sequence belongs to the beta-defensin family. Monomer. Homodimer.

It localises to the secreted. The protein resides in the membrane. Functionally, has bactericidal activity. May act as a ligand for C-C chemokine receptor CCR6. Positively regulates the sperm motility and bactericidal activity in a CCR6-dependent manner. Binds to CCR6 and triggers Ca2+ mobilization in the sperm which is important for its motility. This is Beta-defensin 1 (DEFB1) from Saguinus oedipus (Cotton-top tamarin).